The following is a 614-amino-acid chain: MNKIHLLDEKTINKISAGEVVERPASIVKELIENSIDAGSKNITVEILEGGIPYIKVSDDGCGMNEIDAILAFERHATSKIKSDNDLYSIGTLGFRGEALASIAAVSHVTLQTKEEGALFGTKVVVEGGKVVEKTTCGCAKGCSIEVRDVFFNTPARRKFLKRPSTESMYITDVVTKLCLSHPEVSFKYVKDRKLQFITSGNGNIEDVILRLFGNEVYSSLMSASFESEDLKLKILAGKNSLNYSNRNMQFFYVNGRYVKNKTLSAAVDEAFKTYIPVNRYPAVFLYMEIDPRQIDVNIHPSKLEIKFSDERRIFEAVYKTIKDSLHKYNLIPEVKIEEKKNIFEIETPTISAEQTKLYFTSSDKEVEKEKKKFDNEFKGKNVFLKDNVLKENSKNSSLDNHLAVYEEYEHEKEEINKNDLAKKISDIRIVGTLFSTYIIVEKEDVFYIIDQHAAHERILYEKFTSQYEKIQTRQVTFPIVVELQPRDLELVHQEKELLNKLGYVFEEFGNNSIILREVPVILGQPEARQLFIDIVEKLKDKELVNKISLKEENIIMMACKAAVKAMDNLSEKEINKLFDDLKITENPYTCPHGRPVIIAITKTQLEKMFKRIM.

The protein belongs to the DNA mismatch repair MutL/HexB family.

In terms of biological role, this protein is involved in the repair of mismatches in DNA. It is required for dam-dependent methyl-directed DNA mismatch repair. May act as a 'molecular matchmaker', a protein that promotes the formation of a stable complex between two or more DNA-binding proteins in an ATP-dependent manner without itself being part of a final effector complex. The protein is DNA mismatch repair protein MutL of Thermoanaerobacter pseudethanolicus (strain ATCC 33223 / 39E) (Clostridium thermohydrosulfuricum).